The following is a 1026-amino-acid chain: Multidrug resistance protein MdtC (1026 aa).

11 helical membrane passes run 15-35 (ILIA…LPVA), 333-353 (EVEE…FLFL), 360-380 (LIPA…MYLC), 387-407 (LSLM…IVVL), 431-451 (VGFT…PLLL), 463-483 (FAVT…TLTP), 528-548 (LVGV…IAIP), 853-873 (LILI…LYES), 897-917 (LFNA…IGIV), 953-973 (PIMM…LSDG), and 984-1004 (ITIV…TPVV).

This sequence belongs to the resistance-nodulation-cell division (RND) (TC 2.A.6) family. MdtC subfamily. Part of a tripartite efflux system composed of MdtA, MdtB and MdtC. MdtC forms a heteromultimer with MdtB.

It localises to the cell inner membrane. This chain is Multidrug resistance protein MdtC, found in Salmonella paratyphi B (strain ATCC BAA-1250 / SPB7).